The sequence spans 361 residues: G-protein coupled receptor 52 (361 aa).

Residues 1–44 (MNESRWTEWRILNMSSSIVNVSEHHSCPLGFGHYSVEDVCIFET) lie on the Extracellular side of the membrane. N-linked (GlcNAc...) asparagine glycans are attached at residues Asn-2, Asn-13, and Asn-20. Residues 45-65 (VVIVLLTFLIISGNLTVIFVF) form a helical membrane-spanning segment. Residues 66 to 81 (HCAPLLHHYTTSYFIQ) lie on the Cytoplasmic side of the membrane. A helical membrane pass occupies residues 82-102 (TMAYADLLVGVTCLVPTLSLL). At 103–115 (HYSTGVHESLTCQ) the chain is on the extracellular side. An intrachain disulfide couples Cys-114 to Cys-193. Residues 116–136 (VFGYIISVLKSVSMACLACIS) traverse the membrane as a helical segment. At 137–159 (VDRYLAITKPLSYNQLVTPCRLR) the chain is on the cytoplasmic side. The chain crosses the membrane as a helical span at residues 160 to 180 (ICIIMIWIYSCLIFLPSFFGW). Residues 181-205 (GKPGYHGDIFEWCATSWLTSAYFTC) are Extracellular-facing. A helical membrane pass occupies residues 206–226 (FIVCLLYAPAALVVCFTYFHI). Over 227 to 265 (FKICRQHTKEINDRRARFPSHEVEASREAGHSPDRRYAM) the chain is Cytoplasmic. Residues 266–286 (VLFRITSVFYMLWLPYIIYFL) form a helical membrane-spanning segment. Residues 287–296 (LESSRVLDNP) lie on the Extracellular side of the membrane. Residues 297-317 (TLSFLTTWLAISNSFCNCVIY) traverse the membrane as a helical segment. Residues 318 to 361 (SLSNSVFRLGLRRLSETMCTSCVCAKDQEAQDPKPRRRANSCSI) are Cytoplasmic-facing.

It belongs to the G-protein coupled receptor 1 family. Expressed in brain, especially in striatum. Expressed in the striatum, nucleus accumbens, and lateral globus pallidus.

The protein resides in the cell membrane. In terms of biological role, G- protein coupled receptor activated by antipsychotics reserpine leading to an increase in intracellular cAMP and its internalization. May play a role in locomotor activity through modulation of dopamine, NMDA and ADORA2A-induced locomotor activity. These behavioral changes are accompanied by modulation of the dopamine receptor signaling pathway in striatum. Modulates HTT level via cAMP-dependent but PKA independent mechanisms throught activation of RAB39B that translocates HTT to the endoplasmic reticulum, thus avoiding proteasome degradation. The polypeptide is G-protein coupled receptor 52 (Mus musculus (Mouse)).